The primary structure comprises 22 residues: Defensin D1 (22 aa).

This sequence belongs to the DEFL family. Group II subfamily.

Functionally, antimicrobial peptide. Active against Gram-positive and Gram-negative bacterial pathogens. This chain is Defensin D1, found in Spinacia oleracea (Spinach).